Consider the following 524-residue polypeptide: Putative cysteine ligase BshC (524 aa).

Positions 437 to 457 (AQALDRSARKINYQIEKMERK) form a coiled coil.

The protein belongs to the BshC family.

The chain is Putative cysteine ligase BshC from Solibacter usitatus (strain Ellin6076).